A 463-amino-acid chain; its full sequence is ATP synthase subunit beta (463 aa).

Position 151 to 158 (151 to 158 (GGAGVGKT)) interacts with ATP.

This sequence belongs to the ATPase alpha/beta chains family. F-type ATPases have 2 components, CF(1) - the catalytic core - and CF(0) - the membrane proton channel. CF(1) has five subunits: alpha(3), beta(3), gamma(1), delta(1), epsilon(1). CF(0) has three main subunits: a(1), b(2) and c(9-12). The alpha and beta chains form an alternating ring which encloses part of the gamma chain. CF(1) is attached to CF(0) by a central stalk formed by the gamma and epsilon chains, while a peripheral stalk is formed by the delta and b chains.

It localises to the cell membrane. The enzyme catalyses ATP + H2O + 4 H(+)(in) = ADP + phosphate + 5 H(+)(out). Functionally, produces ATP from ADP in the presence of a proton gradient across the membrane. The catalytic sites are hosted primarily by the beta subunits. In Clostridium botulinum (strain ATCC 19397 / Type A), this protein is ATP synthase subunit beta.